Reading from the N-terminus, the 565-residue chain is Adenine deaminase (565 aa).

Belongs to the metallo-dependent hydrolases superfamily. Adenine deaminase family. Requires Mn(2+) as cofactor.

It carries out the reaction adenine + H2O + H(+) = hypoxanthine + NH4(+). In Cereibacter sphaeroides (strain ATCC 17025 / ATH 2.4.3) (Rhodobacter sphaeroides), this protein is Adenine deaminase.